A 129-amino-acid chain; its full sequence is Phosphoribosyl-AMP cyclohydrolase (129 aa).

Asp-84 contributes to the Mg(2+) binding site. Residue Cys-85 coordinates Zn(2+). Positions 86 and 88 each coordinate Mg(2+). Residues Cys-101 and Cys-108 each coordinate Zn(2+).

It belongs to the PRA-CH family. As to quaternary structure, homodimer. Mg(2+) serves as cofactor. Requires Zn(2+) as cofactor.

It is found in the cytoplasm. The enzyme catalyses 1-(5-phospho-beta-D-ribosyl)-5'-AMP + H2O = 1-(5-phospho-beta-D-ribosyl)-5-[(5-phospho-beta-D-ribosylamino)methylideneamino]imidazole-4-carboxamide. Its pathway is amino-acid biosynthesis; L-histidine biosynthesis; L-histidine from 5-phospho-alpha-D-ribose 1-diphosphate: step 3/9. Functionally, catalyzes the hydrolysis of the adenine ring of phosphoribosyl-AMP. The chain is Phosphoribosyl-AMP cyclohydrolase from Halobacterium salinarum (strain ATCC 700922 / JCM 11081 / NRC-1) (Halobacterium halobium).